The primary structure comprises 134 residues: ATP synthase epsilon chain (134 aa).

It belongs to the ATPase epsilon chain family. In terms of assembly, F-type ATPases have 2 components, CF(1) - the catalytic core - and CF(0) - the membrane proton channel. CF(1) has five subunits: alpha(3), beta(3), gamma(1), delta(1), epsilon(1). CF(0) has three main subunits: a, b and c.

It localises to the cell inner membrane. In terms of biological role, produces ATP from ADP in the presence of a proton gradient across the membrane. In Sinorhizobium medicae (strain WSM419) (Ensifer medicae), this protein is ATP synthase epsilon chain.